A 42-amino-acid polypeptide reads, in one-letter code: uncharacterized protein (42 aa).

This is an uncharacterized protein from Dictyostelium discoideum (Social amoeba).